Here is a 328-residue protein sequence, read N- to C-terminus: MKLARTVSVAVTGGTGQIAYSFLFALAHGDVFGSDCGIDLRVYDLPGLERVLSGIRMELDDCAYPLLQSLRVTTSLEDAFDGIDAAFLIGAAPRGPGMERSDLLKRNGEIFSLQGSVLNTSAKRDAKIFVVGNPVNTNCWIAMSRAPKLNRRNFHSMLRLDQNRMQAMLAHRAQVPLDEVTNVVIWGNHSAKQVPDFTQSLISGKPAVEVISDRDWLENIMLPSIQNRGSAVIEARGKSSAGSAARALAEAARSIFVPKEGEWFSTGVCSDYNPYGIPEDLIFGFPCRMLPSGDYEIIPGLSWDVFIKNKIQISLDEISQEKANVSLL.

Residue 13–19 participates in NAD(+) binding; that stretch reads GGTGQIA. Positions 94 and 100 each coordinate substrate. NAD(+)-binding positions include N107, Q114, and 131–133; that span reads VGN. Positions 133 and 164 each coordinate substrate. The active-site Proton acceptor is the H189.

This sequence belongs to the LDH/MDH superfamily. MDH type 2 family.

The catalysed reaction is (S)-malate + NAD(+) = oxaloacetate + NADH + H(+). In terms of biological role, catalyzes the reversible oxidation of malate to oxaloacetate. This is Malate dehydrogenase from Chlamydia felis (strain Fe/C-56) (Chlamydophila felis).